The sequence spans 336 residues: Fructose-1,6-bisphosphatase class 1 (336 aa).

Mg(2+) is bound by residues E90, D112, L114, and D115. Substrate contacts are provided by residues 115–118, N211, and K277; that span reads DGSS. Mg(2+) is bound at residue E283.

It belongs to the FBPase class 1 family. In terms of assembly, homotetramer. It depends on Mg(2+) as a cofactor.

It localises to the cytoplasm. The catalysed reaction is beta-D-fructose 1,6-bisphosphate + H2O = beta-D-fructose 6-phosphate + phosphate. It participates in carbohydrate biosynthesis; gluconeogenesis. This chain is Fructose-1,6-bisphosphatase class 1, found in Pseudomonas entomophila (strain L48).